The primary structure comprises 902 residues: Aconitate hydratase A (902 aa).

3 residues coordinate [4Fe-4S] cluster: Cys441, Cys507, and Cys510.

This sequence belongs to the aconitase/IPM isomerase family. Monomer. The cofactor is [4Fe-4S] cluster.

The enzyme catalyses citrate = D-threo-isocitrate. It carries out the reaction (2S,3R)-3-hydroxybutane-1,2,3-tricarboxylate = 2-methyl-cis-aconitate + H2O. The protein operates within carbohydrate metabolism; tricarboxylic acid cycle; isocitrate from oxaloacetate: step 2/2. Its pathway is organic acid metabolism; propanoate degradation. Its function is as follows. Involved in the catabolism of short chain fatty acids (SCFA) via the tricarboxylic acid (TCA)(acetyl degradation route) and probably the 2-methylcitrate cycle I (propionate degradation route). Catalyzes the reversible isomerization of citrate to isocitrate via cis-aconitate. Also able to catalyze the hydration of cis-homoaconitate to yield (R)-homocitrate, but with a lower efficiency. Could catalyze the hydration of 2-methyl-cis-aconitate to yield (2R,3S)-2-methylisocitrate. The apo form of AcnA functions as a RNA-binding regulatory protein. The sequence is that of Aconitate hydratase A (acoA) from Thermus thermophilus (strain ATCC 27634 / DSM 579 / HB8).